The chain runs to 219 residues: Leukocyte surface antigen CD53 (219 aa).

Residues 1–11 (MGMSSLKLLKF) are Cytoplasmic-facing. A helical transmembrane segment spans residues 12 to 32 (VLFFFNLIFWFCGCCILGLGI). The Extracellular segment spans residues 33-54 (YLLIHSKFGVLFHNLPSLTLGN). Residues 55 to 69 (VLVIVGSVIMVVAFL) traverse the membrane as a helical segment. Over 70–80 (GCMGSIKENKC) the chain is Cytoplasmic. A helical membrane pass occupies residues 81-106 (LLMSFFVLLLIILLAEVTLAILLFVY). The Extracellular portion of the chain corresponds to 107–181 (EQKLKEYVAE…IQAKQWFHSN (75 aa)). N129 and N148 each carry an N-linked (GlcNAc...) asparagine glycan. The chain crosses the membrane as a helical span at residues 182–206 (FLYIGITTICVCVIQVLGMSFALTL). Residues 207–219 (NCQIDKTSQVLGL) lie on the Cytoplasmic side of the membrane.

This sequence belongs to the tetraspanin (TM4SF) family. Interacts with SCIMP. Interacts with CD45/PTPRC. Interacts with IL7R. Interacts with RBL2 and PPP2CA.

The protein localises to the cell membrane. It is found in the cell junction. It localises to the membrane. Its subcellular location is the synapse. Functionally, structural component of specialized membrane microdomains known as tetraspanin-enriched microdomains (TERMs), which act as platforms for receptor clustering and signaling. Participates thereby in diverse biological functions such as cell signal transduction, adhesion, migration and protein trafficking. Plays a role in the activation of monocytes and B-cells. Acts as an essential regulator of B-cell development by promoting interleukin-7 receptor/IL7R signaling. Also promotes, in B-cells, the BCR signaling by recruiting PKC to the plasma membrane in order to phosphorylate its substrates. Plays an essential role in B- and T-cells homing to lymph nodes by stabilizing L-selectin/SELL cell surface expression. Also mediates metabolic and inflammatory functions in hepatocytes and adipose tissue by promoting TNF-alpha and LPS signaling independent of the immune compartment. The protein is Leukocyte surface antigen CD53 (CD53) of Bos taurus (Bovine).